The chain runs to 302 residues: Oxygen-dependent coproporphyrinogen-III oxidase (302 aa).

A substrate-binding site is contributed by Ser-94. The a divalent metal cation site is built by His-98 and His-108. Residue His-108 is the Proton donor of the active site. 110 to 112 lines the substrate pocket; that stretch reads NVR. His-147 and His-177 together coordinate a divalent metal cation. The tract at residues 242 to 277 is important for dimerization; it reads YVEFNLVYDRGTLFGLQTGGRTESILMSMPPLVRWQ. 260 to 262 is a binding site for substrate; the sequence is GGR.

It belongs to the aerobic coproporphyrinogen-III oxidase family. In terms of assembly, homodimer. A divalent metal cation is required as a cofactor.

The protein resides in the cytoplasm. The enzyme catalyses coproporphyrinogen III + O2 + 2 H(+) = protoporphyrinogen IX + 2 CO2 + 2 H2O. The protein operates within porphyrin-containing compound metabolism; protoporphyrin-IX biosynthesis; protoporphyrinogen-IX from coproporphyrinogen-III (O2 route): step 1/1. Its function is as follows. Involved in the heme biosynthesis. Catalyzes the aerobic oxidative decarboxylation of propionate groups of rings A and B of coproporphyrinogen-III to yield the vinyl groups in protoporphyrinogen-IX. The sequence is that of Oxygen-dependent coproporphyrinogen-III oxidase from Shewanella baltica (strain OS155 / ATCC BAA-1091).